The following is a 171-amino-acid chain: Iron-sulfur cluster assembly protein 3 (171 aa).

The transit peptide at 1–49 (MLRQTTKRAFLGLASQNPTPFPVVSRLYHPNVIDHYDNPRNVGSFDKND) directs the protein to the mitochondrion.

Belongs to the NifU family. Component of the core Fe-S cluster (ISC) assembly machinery. [2Fe-2S] cluster is required as a cofactor. Mostly expressed in flowers and pollen, and, to a lower extent, in leaves and roots.

It localises to the mitochondrion matrix. It functions in the pathway cofactor biosynthesis; iron-sulfur cluster biosynthesis. Functionally, scaffold protein for the de novo synthesis of iron-sulfur (Fe-S) clusters within mitochondria, which is required for maturation of both mitochondrial and cytoplasmic [2Fe-2S] and [4Fe-4S] proteins. First, a [2Fe-2S] cluster is transiently assembled on the scaffold protein ISCU (ISU1, ISU2 or ISU3). In a second step, the cluster is released from ISCU, transferred to a glutaredoxin, followed by the formation of mitochondrial [2Fe-2S] proteins, the synthesis of [4Fe-4S] clusters and their target-specific insertion into the recipient apoproteins. Cluster assembly on ISCU depends on the function of the cysteine desulfurase complex NFS1-ISD11, which serves as the sulfur donor for cluster synthesis, the iron-binding protein frataxin as the putative iron donor, and the electron transfer chain comprised of ferredoxin reductase and ferredoxin, which receive their electrons from NADH. In Arabidopsis thaliana (Mouse-ear cress), this protein is Iron-sulfur cluster assembly protein 3 (ISU3).